Consider the following 156-residue polypeptide: Nucleoredoxin-like protein 2 (156 aa).

A Thioredoxin domain is found at 9-147; the sequence is RLVTREGTVV…LACFQNWVEA (139 aa).

Belongs to the nucleoredoxin family. As to expression, both isoforms are expressed in retina, in the photoreceptor layer, and throughout the olfactory sensory neuron layer of the nasal epithelium, in neurons. Also expressed at low levels in brain and testis.

Functionally, may be involved in the maintenance of both the function and the viability of sensory neurons, including photoreceptors and olfactory neurons. In the retina, isoform 1 may be required for rod function and isoform 2 for cone viability and function. This is Nucleoredoxin-like protein 2 (Nxnl2) from Mus musculus (Mouse).